The sequence spans 455 residues: Chromosomal replication initiator protein DnaA (455 aa).

Residues 1–75 (MDTNNNIEKE…EILSQNKVGM (75 aa)) are domain I, interacts with DnaA modulators. The segment at 75–106 (MHLAHSVDVRIEVAPKIQISAQPNINYKAVKT) is domain II. A domain III, AAA+ region region spans residues 107-321 (SVKDSYTFEN…GAIIKISVNA (215 aa)). Residues Gly151, Gly153, Lys154, and Thr155 each coordinate ATP. The segment at 322–455 (NLMNAPIDLN…DKKTAFHSSE (134 aa)) is domain IV, binds dsDNA.

It belongs to the DnaA family. Oligomerizes as a right-handed, spiral filament on DNA at oriC.

It localises to the cytoplasm. Its function is as follows. Plays an essential role in the initiation and regulation of chromosomal replication. ATP-DnaA binds to the origin of replication (oriC) to initiate formation of the DNA replication initiation complex once per cell cycle. Binds the DnaA box (a 9 base pair repeat at the origin) and separates the double-stranded (ds)DNA. Forms a right-handed helical filament on oriC DNA; dsDNA binds to the exterior of the filament while single-stranded (ss)DNA is stabiized in the filament's interior. The ATP-DnaA-oriC complex binds and stabilizes one strand of the AT-rich DNA unwinding element (DUE), permitting loading of DNA polymerase. After initiation quickly degrades to an ADP-DnaA complex that is not apt for DNA replication. Binds acidic phospholipids. In Helicobacter pylori (strain Shi470), this protein is Chromosomal replication initiator protein DnaA.